We begin with the raw amino-acid sequence, 84 residues long: Toxin NvePTx1 (84 aa).

The first 21 residues, Met-1–Ala-21, serve as a signal peptide directing secretion. A propeptide spanning residues Ser-22–Arg-34 is cleaved from the precursor.

It belongs to the sea anemone type 5 potassium channel toxin family. Contains 4 disulfide bonds. In terms of tissue distribution, in unfertilized eggs and early post-fertilization stages, is expressed uniformly. In gastrulae, the expression becomes spatially-localized and seems to be absent from the oral and aboral poles. In planulae, the expression is clearly observed in the ectoderm in packed gland cells absent from the two body poles, and upon metamorphosis, the expression diminishes. There is two types of gland cells, one large and elongated and another small and round. This toxin is maternally deposited at both protein and RNA levels.

It is found in the secreted. The protein localises to the nematocyst. Its function is as follows. Neurotoxin that is probably only defensive. Acts as a voltage-gated potassium channel (Kv) inhibitor. In vivo, induces a rapid increase in swimming speed on zebrafish larvae, as well as death which occurs between 2 and 18 hours later. The protein is Toxin NvePTx1 of Nematostella vectensis (Starlet sea anemone).